The primary structure comprises 88 residues: Putative regulatory protein PCC7424_3427 (88 aa).

This sequence belongs to the RemA family.

The polypeptide is Putative regulatory protein PCC7424_3427 (Gloeothece citriformis (strain PCC 7424) (Cyanothece sp. (strain PCC 7424))).